Reading from the N-terminus, the 120-residue chain is Prefoldin subunit beta (120 aa).

Belongs to the prefoldin subunit beta family. Heterohexamer of two alpha and four beta subunits.

The protein localises to the cytoplasm. Its function is as follows. Molecular chaperone capable of stabilizing a range of proteins. Seems to fulfill an ATP-independent, HSP70-like function in archaeal de novo protein folding. The chain is Prefoldin subunit beta from Methanothrix thermoacetophila (strain DSM 6194 / JCM 14653 / NBRC 101360 / PT) (Methanosaeta thermophila).